The chain runs to 260 residues: UPF0294 protein YPO1077/y3099/YP_2772 (260 aa).

The protein belongs to the UPF0294 family.

The protein resides in the cytoplasm. The sequence is that of UPF0294 protein YPO1077/y3099/YP_2772 from Yersinia pestis.